A 150-amino-acid chain; its full sequence is Large ribosomal subunit protein bL9 (150 aa).

It belongs to the bacterial ribosomal protein bL9 family.

In terms of biological role, binds to the 23S rRNA. The polypeptide is Large ribosomal subunit protein bL9 (Burkholderia vietnamiensis (strain G4 / LMG 22486) (Burkholderia cepacia (strain R1808))).